We begin with the raw amino-acid sequence, 144 residues long: Tryparedoxin (144 aa).

Positions 2-144 (SGLAKYLPGA…PDGANFPWPN (143 aa)) constitute a Thioredoxin domain. A disulfide bridge connects residues cysteine 40 and cysteine 43.

It belongs to the thioredoxin family.

Its function is as follows. Acts as a thiol-disulfide oxidoreductase. It is spontaneously reduced by trypanothione. The sequence is that of Tryparedoxin from Trypanosoma brucei brucei.